The following is a 315-amino-acid chain: Periplasmic [NiFeSe] hydrogenase small subunit (315 aa).

Positions 1–32 form a signal peptide, tat-type signal; that stretch reads MSLSRREFVKLCSAGVAGLGISQIYHPGIVHA. [4Fe-4S] cluster-binding residues include C50, C53, C158, C196, H240, C243, C263, C269, C278, C290, C296, and C299.

This sequence belongs to the [NiFe]/[NiFeSe] hydrogenase small subunit family. As to quaternary structure, heterodimer of a large and a small subunit. The cofactor is [4Fe-4S] cluster. Post-translationally, predicted to be exported by the Tat system. The position of the signal peptide cleavage has been experimentally proven.

The protein localises to the periplasm. The enzyme catalyses H2 + A = AH2. The polypeptide is Periplasmic [NiFeSe] hydrogenase small subunit (Desulfomicrobium baculatum (Desulfovibrio baculatus)).